We begin with the raw amino-acid sequence, 310 residues long: 4-hydroxyproline 2-epimerase (310 aa).

The Proton acceptor role is filled by C88. Substrate is bound by residues 89–90, H208, and D232; that span reads GH. The active-site Proton donor is the C236. 237-238 contributes to the substrate binding site; sequence GT.

This sequence belongs to the proline racemase family.

The enzyme catalyses trans-4-hydroxy-L-proline = cis-4-hydroxy-D-proline. In terms of biological role, catalyzes the epimerization of trans-4-hydroxy-L-proline (t4LHyp) to cis-4-hydroxy-D-proline (c4DHyp). Is likely involved in a degradation pathway that converts t4LHyp to alpha-ketoglutarate. Displays no proline racemase activity. This chain is 4-hydroxyproline 2-epimerase, found in Acinetobacter baumannii (strain AYE).